Reading from the N-terminus, the 476-residue chain is MKVTLPAFEKARVLVLGDVMLDRYWVGPTGRISPEAPVPVVKINQIEDRPGGAANVALNIATLGGQVQLAGLVGDDETAKALTLGVQTLGVEPQWLVVNDKPTITKLRVLSRNQQLIRLDFEEEFDSASSQALFKQSEAMLDNVDVLVLSDYAKGAIADPRAFIAKARAKGVTVLVDPKGSDFARYHGASLITPNMSEFEAVVGPVKDEADLIEKARQLIKTHEFSAMLVTRSEKGMTLITADEPELHIPTVAREVYDVTGAGDTVISALATSLGAGSTLAQACAIANTAAGVVVGKLGTSTVSRIELIGALASHQGESGFGVVSEDQLAYAMEQARLRGERVVMTNGCFDILHAGHVSYLKQAKALGDRLIVAVNSDASVKRLKGDGRPVNQVDRRMAVLAGLAAVDWVVPFCEDTPERIITRLLPDALVKGGDYKVEDIAGGAQVIAAGGKVEVLGFEDGVSTTSIIQNIMARQ.

Positions 1-319 (MKVTLPAFEK…GALASHQGES (319 aa)) are ribokinase. 195 to 198 (NMSE) contacts ATP. D264 is an active-site residue. A cytidylyltransferase region spans residues 345 to 476 (MTNGCFDILH…SIIQNIMARQ (132 aa)).

The protein in the N-terminal section; belongs to the carbohydrate kinase PfkB family. In the C-terminal section; belongs to the cytidylyltransferase family. As to quaternary structure, homodimer.

The enzyme catalyses D-glycero-beta-D-manno-heptose 7-phosphate + ATP = D-glycero-beta-D-manno-heptose 1,7-bisphosphate + ADP + H(+). It carries out the reaction D-glycero-beta-D-manno-heptose 1-phosphate + ATP + H(+) = ADP-D-glycero-beta-D-manno-heptose + diphosphate. The protein operates within nucleotide-sugar biosynthesis; ADP-L-glycero-beta-D-manno-heptose biosynthesis; ADP-L-glycero-beta-D-manno-heptose from D-glycero-beta-D-manno-heptose 7-phosphate: step 1/4. It participates in nucleotide-sugar biosynthesis; ADP-L-glycero-beta-D-manno-heptose biosynthesis; ADP-L-glycero-beta-D-manno-heptose from D-glycero-beta-D-manno-heptose 7-phosphate: step 3/4. Functionally, catalyzes the phosphorylation of D-glycero-D-manno-heptose 7-phosphate at the C-1 position to selectively form D-glycero-beta-D-manno-heptose-1,7-bisphosphate. In terms of biological role, catalyzes the ADP transfer from ATP to D-glycero-beta-D-manno-heptose 1-phosphate, yielding ADP-D-glycero-beta-D-manno-heptose. This is Bifunctional protein HldE from Shewanella denitrificans (strain OS217 / ATCC BAA-1090 / DSM 15013).